The chain runs to 242 residues: Leucyl/phenylalanyl-tRNA--protein transferase (242 aa).

The protein belongs to the L/F-transferase family.

The protein resides in the cytoplasm. It catalyses the reaction N-terminal L-lysyl-[protein] + L-leucyl-tRNA(Leu) = N-terminal L-leucyl-L-lysyl-[protein] + tRNA(Leu) + H(+). The catalysed reaction is N-terminal L-arginyl-[protein] + L-leucyl-tRNA(Leu) = N-terminal L-leucyl-L-arginyl-[protein] + tRNA(Leu) + H(+). The enzyme catalyses L-phenylalanyl-tRNA(Phe) + an N-terminal L-alpha-aminoacyl-[protein] = an N-terminal L-phenylalanyl-L-alpha-aminoacyl-[protein] + tRNA(Phe). Functionally, functions in the N-end rule pathway of protein degradation where it conjugates Leu, Phe and, less efficiently, Met from aminoacyl-tRNAs to the N-termini of proteins containing an N-terminal arginine or lysine. This chain is Leucyl/phenylalanyl-tRNA--protein transferase, found in Edwardsiella ictaluri (strain 93-146).